The following is a 530-amino-acid chain: Light-independent protochlorophyllide reductase subunit B (530 aa).

D36 provides a ligand contact to [4Fe-4S] cluster. Residue D287 is the Proton donor of the active site. 422–423 is a substrate binding site; that stretch reads GL. Positions 453 to 472 are disordered; it reads PAVQTASSEPQPSAIETPSA. Polar residues predominate over residues 454 to 463; that stretch reads AVQTASSEPQ.

The protein belongs to the ChlB/BchB/BchZ family. As to quaternary structure, protochlorophyllide reductase is composed of three subunits; BchL, BchN and BchB. Forms a heterotetramer of two BchB and two BchN subunits. It depends on [4Fe-4S] cluster as a cofactor.

The catalysed reaction is chlorophyllide a + oxidized 2[4Fe-4S]-[ferredoxin] + 2 ADP + 2 phosphate = protochlorophyllide a + reduced 2[4Fe-4S]-[ferredoxin] + 2 ATP + 2 H2O. It functions in the pathway porphyrin-containing compound metabolism; bacteriochlorophyll biosynthesis (light-independent). Its function is as follows. Component of the dark-operative protochlorophyllide reductase (DPOR) that uses Mg-ATP and reduced ferredoxin to reduce ring D of protochlorophyllide (Pchlide) to form chlorophyllide a (Chlide). This reaction is light-independent. The NB-protein (BchN-BchB) is the catalytic component of the complex. This is Light-independent protochlorophyllide reductase subunit B from Rhodopseudomonas palustris (strain BisB18).